The primary structure comprises 360 residues: Peptide chain release factor 1 (360 aa).

Gln-235 bears the N5-methylglutamine mark. Residues 284–312 (AKRQQAEASTRRNLLGSGDRSDRNRTYNF) are disordered.

This sequence belongs to the prokaryotic/mitochondrial release factor family. Post-translationally, methylated by PrmC. Methylation increases the termination efficiency of RF1.

It is found in the cytoplasm. Peptide chain release factor 1 directs the termination of translation in response to the peptide chain termination codons UAG and UAA. The protein is Peptide chain release factor 1 of Escherichia coli O81 (strain ED1a).